The sequence spans 194 residues: FAD-linked sulfhydryl oxidase ERV1 (194 aa).

A disordered region spans residues 44-72 (LSLSLSPPPTPPSPPPPPPEVLKKDSKAA). Positions 49–63 (SPPPTPPSPPPPPPE) are enriched in pro residues. Residues 72–172 (APLTKEEVGR…FPCQRVNARW (101 aa)) form the ERV/ALR sulfhydryl oxidase domain. Positions 76, 81, 84, 121, 125, 148, 151, 152, 155, 160, and 171 each coordinate FAD. The cysteines at positions 119 and 122 are disulfide-linked. Cys148 and Cys165 are oxidised to a cystine. Cys177 and Cys182 form a disulfide bridge. The Required for dimerization and substrate specificity motif lies at 177–182 (CPERSC).

Homodimer. Requires FAD as cofactor. Contains three disulfide bonds; one catalytic disulfide (Cys-119 to Cys-122), one structural disulfide (Cys-148 to Cys-165), and one shuttle disulfide (Cys-177 to Cys-182).

It is found in the mitochondrion. It carries out the reaction 2 R'C(R)SH + O2 = R'C(R)S-S(R)CR' + H2O2. Its function is as follows. FAD-dependent sulfhydryl oxidase that catalyzes disulfide bond formation. Oxidizes thioredoxin in vitro. Required for the import and folding of small cysteine-containing proteins in the mitochondrial intermembrane space, and can act independently of the oxidoreductase MIA40. Can oxidize the cytochrome c oxidase assembly protein COX19, a typical substrate of MIA40. The chain is FAD-linked sulfhydryl oxidase ERV1 from Oryza sativa subsp. japonica (Rice).